Here is a 146-residue protein sequence, read N- to C-terminus: Cytochrome c oxidase subunit 5A, mitochondrial (146 aa).

A mitochondrion-targeting transit peptide spans 1–37; sequence MLAAALRRCTAAAAARGLLHPVSAPSPAAAVCSIRCY. Positions 2-16 match the SIFI-degron motif; it reads LAAALRRCTAAAAAR. N6-acetyllysine occurs at positions 83 and 109. Thr137 is modified (phosphothreonine).

Component of the cytochrome c oxidase (complex IV, CIV), a multisubunit enzyme composed of 14 subunits. The complex is composed of a catalytic core of 3 subunits MT-CO1, MT-CO2 and MT-CO3, encoded in the mitochondrial DNA, and 11 supernumerary subunits COX4I, COX5A, COX5B, COX6A, COX6B, COX6C, COX7A, COX7B, COX7C, COX8 and NDUFA4, which are encoded in the nuclear genome. The complex exists as a monomer or a dimer and forms supercomplexes (SCs) in the inner mitochondrial membrane with NADH-ubiquinone oxidoreductase (complex I, CI) and ubiquinol-cytochrome c oxidoreductase (cytochrome b-c1 complex, complex III, CIII), resulting in different assemblies (supercomplex SCI(1)III(2)IV(1) and megacomplex MCI(2)III(2)IV(2)). Interacts with AFG1L. Interacts with RAB5IF. In terms of processing, in response to mitochondrial stress, the precursor protein is ubiquitinated by the SIFI complex in the cytoplasm before mitochondrial import, leading to its degradation. Within the SIFI complex, UBR4 initiates ubiquitin chain that are further elongated or branched by KCMF1. In terms of tissue distribution, expressed in the head of epididymal sperm but not in testicular sperm (at protein level).

The protein resides in the mitochondrion inner membrane. The protein operates within energy metabolism; oxidative phosphorylation. Functionally, component of the cytochrome c oxidase, the last enzyme in the mitochondrial electron transport chain which drives oxidative phosphorylation. The respiratory chain contains 3 multisubunit complexes succinate dehydrogenase (complex II, CII), ubiquinol-cytochrome c oxidoreductase (cytochrome b-c1 complex, complex III, CIII) and cytochrome c oxidase (complex IV, CIV), that cooperate to transfer electrons derived from NADH and succinate to molecular oxygen, creating an electrochemical gradient over the inner membrane that drives transmembrane transport and the ATP synthase. Cytochrome c oxidase is the component of the respiratory chain that catalyzes the reduction of oxygen to water. Electrons originating from reduced cytochrome c in the intermembrane space (IMS) are transferred via the dinuclear copper A center (CU(A)) of subunit 2 and heme A of subunit 1 to the active site in subunit 1, a binuclear center (BNC) formed by heme A3 and copper B (CU(B)). The BNC reduces molecular oxygen to 2 water molecules using 4 electrons from cytochrome c in the IMS and 4 protons from the mitochondrial matrix. The protein is Cytochrome c oxidase subunit 5A, mitochondrial (Cox5a) of Rattus norvegicus (Rat).